A 178-amino-acid polypeptide reads, in one-letter code: Large ribosomal subunit protein uL6 (178 aa).

Belongs to the universal ribosomal protein uL6 family. As to quaternary structure, part of the 50S ribosomal subunit.

Functionally, this protein binds to the 23S rRNA, and is important in its secondary structure. It is located near the subunit interface in the base of the L7/L12 stalk, and near the tRNA binding site of the peptidyltransferase center. The sequence is that of Large ribosomal subunit protein uL6 from Staphylococcus saprophyticus subsp. saprophyticus (strain ATCC 15305 / DSM 20229 / NCIMB 8711 / NCTC 7292 / S-41).